The primary structure comprises 156 residues: MAKQHGKHPDTALAQNRKARHDYAVEETYEAGIALTGTEIKSVRDRRVNLKDGFVQVRNGEAWMQNVHISPFKEGNRYNVDPLRSRKLLLHKKEISKLGAATMTKGVTIIPLKMYLKHGFAKVLIGVAHGKREYDKRQDIKKREQQRQIDRVMKHY.

It belongs to the SmpB family.

It is found in the cytoplasm. Required for rescue of stalled ribosomes mediated by trans-translation. Binds to transfer-messenger RNA (tmRNA), required for stable association of tmRNA with ribosomes. tmRNA and SmpB together mimic tRNA shape, replacing the anticodon stem-loop with SmpB. tmRNA is encoded by the ssrA gene; the 2 termini fold to resemble tRNA(Ala) and it encodes a 'tag peptide', a short internal open reading frame. During trans-translation Ala-aminoacylated tmRNA acts like a tRNA, entering the A-site of stalled ribosomes, displacing the stalled mRNA. The ribosome then switches to translate the ORF on the tmRNA; the nascent peptide is terminated with the 'tag peptide' encoded by the tmRNA and targeted for degradation. The ribosome is freed to recommence translation, which seems to be the essential function of trans-translation. This is SsrA-binding protein from Lactiplantibacillus plantarum (strain ATCC BAA-793 / NCIMB 8826 / WCFS1) (Lactobacillus plantarum).